A 106-amino-acid polypeptide reads, in one-letter code: MADFLGMMKQAAQLQSKMKAMQAELDQIEVEGSSGGGLVQVRMSAKMEVRGVSIDPSLLKPDEGGVLEDLLVAAHADAHRKAEAAMQEKMQALTGGLGLPPGLGLG.

This sequence belongs to the YbaB/EbfC family. In terms of assembly, homodimer.

The protein localises to the cytoplasm. It localises to the nucleoid. In terms of biological role, binds to DNA and alters its conformation. May be involved in regulation of gene expression, nucleoid organization and DNA protection. This is Nucleoid-associated protein RPD_0086 from Rhodopseudomonas palustris (strain BisB5).